Here is a 351-residue protein sequence, read N- to C-terminus: Transmembrane protein DDB_G0272716 (351 aa).

Residues Asn4 and Asn59 are each glycosylated (N-linked (GlcNAc...) asparagine). 2 helical membrane passes run 175-195 (FSSLFGVISGFLGIGSVTAIG) and 215-235 (VVAPICAPVLLTFGCLVGAFI). Asn345 is a glycosylation site (N-linked (GlcNAc...) asparagine).

It localises to the membrane. The sequence is that of Transmembrane protein DDB_G0272716 from Dictyostelium discoideum (Social amoeba).